The following is a 476-amino-acid chain: UDP-glycosyltransferase 71C3 (476 aa).

UDP-alpha-D-glucose contacts are provided by residues Ser290, Ala349–Gln351, His366–Glu374, and Tyr388–Gln391.

It belongs to the UDP-glycosyltransferase family.

Functionally, possesses low quercetin 3-O-glucosyltransferase activity in vitro. This chain is UDP-glycosyltransferase 71C3 (UGT71C3), found in Arabidopsis thaliana (Mouse-ear cress).